We begin with the raw amino-acid sequence, 333 residues long: Cap-specific mRNA (nucleoside-2'-O-)-methyltransferase (333 aa).

MRNA is bound at residue Y22. Residues Q39, Y66, G68, G72, D95, R97, V116, and D138 each coordinate S-adenosyl-L-methionine. Positions 169-249 (PVASSLKWRC…NKIVRNKVVI (81 aa)) are binding to NPH-I. The active-site For methyltransferase activity is K175. Residues 177–180 (RCPF), D182, 205–207 (SAE), and E233 contribute to the mRNA site. A compositionally biased stretch (basic and acidic residues) spans 305–320 (SHEPIQRKISSKDSMS). Residues 305–333 (SHEPIQRKISSKDSMSKNRNSKRSVRGNK) form a disordered region. A compositionally biased stretch (basic residues) spans 323 to 333 (RNSKRSVRGNK).

It belongs to the class I-like SAM-binding methyltransferase superfamily. Poxvirus/kinetoplastid 2'-O-MTase family. In terms of assembly, interacts with poly(A) polymerase catalytic subunit OPG063. Interacts with OPG109 and OPG123; these interactions might help linking transcription to capping and polyadenylation.

Its subcellular location is the virion. It carries out the reaction a 5'-end (N(7)-methyl 5'-triphosphoguanosine)-ribonucleoside in mRNA + S-adenosyl-L-methionine = a 5'-end (N(7)-methyl 5'-triphosphoguanosine)-(2'-O-methyl-ribonucleoside) in mRNA + S-adenosyl-L-homocysteine + H(+). Displays methyltransferase, positive regulation of the poly(A) polymerase and transcription elongation activities. Involved in the modification of both mRNA ends and in intermediate and late gene positive transcription elongation. At the mRNAs 5' end, methylates the ribose 2' OH group of the first transcribed nucleotide, thereby producing a 2'-O-methylpurine cap. At the 3' end, functions as a processivity factor which stimulates the activity of the viral poly(A) polymerase OPG063 that creates mRNA's poly(A) tail. In the presence of OPG102, OPG063 does not dissociate from the RNA allowing tail elongation to around 250 adenylates. The polypeptide is Cap-specific mRNA (nucleoside-2'-O-)-methyltransferase (OPG102) (Cynomys gunnisoni (Gunnison's prairie dog)).